Consider the following 170-residue polypeptide: Putative 4-hydroxy-4-methyl-2-oxoglutarate aldolase (170 aa).

Residues 85-88 and Arg107 contribute to the substrate site; that span reads GDMI. Residue Asp108 coordinates a divalent metal cation.

Belongs to the class II aldolase/RraA-like family. In terms of assembly, homotrimer. Requires a divalent metal cation as cofactor.

It carries out the reaction 4-hydroxy-4-methyl-2-oxoglutarate = 2 pyruvate. The catalysed reaction is oxaloacetate + H(+) = pyruvate + CO2. Its function is as follows. Catalyzes the aldol cleavage of 4-hydroxy-4-methyl-2-oxoglutarate (HMG) into 2 molecules of pyruvate. Also contains a secondary oxaloacetate (OAA) decarboxylase activity due to the common pyruvate enolate transition state formed following C-C bond cleavage in the retro-aldol and decarboxylation reactions. The sequence is that of Putative 4-hydroxy-4-methyl-2-oxoglutarate aldolase from Acinetobacter baylyi (strain ATCC 33305 / BD413 / ADP1).